Reading from the N-terminus, the 397-residue chain is MFGSCQAYSRELVMATTFSPSATAWIIQRWQTEPGSVMIRTLNRTSGSLEQLLDTANAENVDLILTSSPMLLQHLQEHQKLALLDSAPAASQKLVPRSIRSTSVAVAVSGFGLLINRSALAARHLPPPADWQDMGLPSYQGALLMSSPSRSDTNHLMVESLLQQKGWTAGWATLLAISGNLVTISSRSFGVADKIKSGLGVAGPVIDNYANLLLNDPNLAFTYFPYSAVSPTYVAVLKNSRHADEARAFIHYLLSPKGQRILADANTGKYPVAPLSADNPRAAQQQRLMAQPPLNYRLILKRQQLVQRMFDTAISFRLAQLKDAWRALHSAETRLKRPLPEIRALLTSVPVDAASSEDETWLAQFDNKSFAEQKMMEWQIWFLNNQRLAIHKLEELK.

An N-terminal signal peptide occupies residues 1-24 (MFGSCQAYSRELVMATTFSPSATA). Residues 102–117 (TSVAVAVSGFGLLINR) traverse the membrane as a helical segment.

It localises to the cell membrane. Functionally, required for pgtP expression, it may act jointly with the PgtA/PgtB signaling proteins. The polypeptide is Phosphoglycerate transport regulatory protein PgtC (pgtC) (Salmonella typhi).